The following is a 709-amino-acid chain: Protein transport protein SEC39 (709 aa).

Belongs to the SEC39 family. In terms of assembly, component of a peripheral membrane protein complex consisting of DSL1, SEC39/DSL3 and TIP20. Bound to a SNARE complex consisting of UFE1, USE1, SEC20 and SEC22 or YKT6 through direct interaction of TIP20 with SEC20. Interacts with TIP20 and DSL1.

Its subcellular location is the endoplasmic reticulum membrane. Required for protein transport between the Golgi and the endoplasmic reticulum. May contribute to tethering of coatomer-coated retrograde transport vesicles to the ER membrane through interaction with and stabilization of the SNARE complex. The polypeptide is Protein transport protein SEC39 (Saccharomyces cerevisiae (strain ATCC 204508 / S288c) (Baker's yeast)).